A 1184-amino-acid chain; its full sequence is Probable phospholipid-transporting ATPase 12 (1184 aa).

The Cytoplasmic portion of the chain corresponds to 1–75 (MATVSGRRRK…TTKYTLATFL (75 aa)). A helical transmembrane segment spans residues 76-97 (PKSLFEQFRRVANFYFLVVGIL). Over 98–101 (SFTP) the chain is Extracellular. A helical membrane pass occupies residues 102 to 124 (LAPYTAVSAIVPLTFVILATMFK). The Cytoplasmic portion of the chain corresponds to 125–306 (EGVEDWRRKQ…SMIERKMDKI (182 aa)). A helical transmembrane segment spans residues 307-328 (IYLMFLMVFSLAFFGSVLFGIW). Topologically, residues 329-364 (TRDDFQNGVMERWYLKPDDSSIFFDPKRAPMAAIYH) are extracellular. Residues 365-382 (FLTALMLNSYFIPISLYV) traverse the membrane as a helical segment. Residues 383 to 921 (SIEIVKVLQS…HGHWCYRRIS (539 aa)) are Cytoplasmic-facing. The 4-aspartylphosphate intermediate role is filled by Asp430. 2 residues coordinate Mg(2+): Asp866 and Asp870. Residues 922 to 941 (KMICYFFYKNITFGFTLFLY) form a helical membrane-spanning segment. At 942-955 (EAYTSFSATPAYND) the chain is on the extracellular side. Residues 956 to 975 (WYLSLYSVFFTSLPVICLGI) form a helical membrane-spanning segment. The Cytoplasmic segment spans residues 976–1005 (FDQDVSAPFCLKFPVLYQEGVQNLLFSWRR). The chain crosses the membrane as a helical span at residues 1006 to 1028 (ILSWMFHGFCSAIIIFFLCKTSL). Topologically, residues 1029-1041 (ESQAFNHEGKTAG) are extracellular. A helical membrane pass occupies residues 1042–1064 (RDILGGTMYTCVVWVVSLQMVLT). Topologically, residues 1065–1070 (ISYFTL) are cytoplasmic. The helical transmembrane segment at 1071 to 1091 (IQHVVVWGSVVIWYLFLMVYG) threads the bilayer. Residues 1092 to 1108 (SLPIRMSTDAYMVFLEA) lie on the Extracellular side of the membrane. The helical transmembrane segment at 1109-1133 (LAPAPSYWITTLFVVLSTMMPYFIF) threads the bilayer. Residues 1134-1184 (SAIQMRFFPMSHGTVQLLRYEDQCSNSGNFEMGRQGSVRPTLVMRSHQPES) are Cytoplasmic-facing.

The protein belongs to the cation transport ATPase (P-type) (TC 3.A.3) family. Type IV subfamily.

It is found in the membrane. The catalysed reaction is ATP + H2O + phospholipidSide 1 = ADP + phosphate + phospholipidSide 2.. Its function is as follows. Involved in transport of phospholipids. This is Probable phospholipid-transporting ATPase 12 from Arabidopsis thaliana (Mouse-ear cress).